A 694-amino-acid chain; its full sequence is Nuclear cap-binding protein subunit 3 (694 aa).

The segment at 1–47 (MAAVRSLRVSVKSDSASDRSESDSESDSDRDAREAEPMEVEEGEVEL) is disordered. Residues 15–36 (SASDRSESDSESDSDRDAREAE) show a composition bias toward basic and acidic residues. The segment covering 37-47 (PMEVEEGEVEL) has biased composition (acidic residues). Residues 126 to 187 (EALHMSGVDD…LSRMPDKEEV (62 aa)) are RNA recognition motif (RRM) domain. Positions 155–158 (WIDD) match the WLDD motif; essential for 7-methylguanosine-containing mRNA cap binding motif. Disordered stretches follow at residues 183–277 (DKEE…VKPF), 336–430 (ILKT…MDYD), and 461–694 (LRNS…DSDS). Positions 189–203 (NTDSSKPSELPVQTQ) are enriched in polar residues. The span at 212–235 (DDDDDDDEEEEGEVDDDDDDDEED) shows a compositional bias: acidic residues. A compositionally biased stretch (basic and acidic residues) spans 236-264 (EKARDIEDETEKKPQETRETSLSQAERDS). The span at 368-386 (EPIEEEEEEEEDGEEDMDA) shows a compositional bias: acidic residues. The span at 387–404 (DDRVVEYKDRGEKERGPR) shows a compositional bias: basic and acidic residues. The span at 477 to 496 (IGGGGGGGSGGAVEGRGEGG) shows a compositional bias: gly residues. Basic and acidic residues-rich tracts occupy residues 501–517 (TSEK…EKRQ), 563–595 (SRRE…DKKT), and 605–618 (SHKD…DKPS). A compositionally biased stretch (acidic residues) spans 634-646 (DSDGVEDEDEEDD). Over residues 685-694 (DGSNGSDSDS) the composition is skewed to low complexity.

It belongs to the NCBP3 family. Component of an alternative cap-binding complex (CBC) composed of NCBP1/CBP80 and NCBP3.

It localises to the nucleus. The protein resides in the cytoplasm. Associates with NCBP1/CBP80 to form an alternative cap-binding complex (CBC) which plays a key role in mRNA export. NCBP3 serves as adapter protein linking the capped RNAs (m7GpppG-capped RNA) to NCBP1/CBP80. Unlike the conventional CBC with NCBP2 which binds both small nuclear RNA (snRNA) and messenger (mRNA) and is involved in their export from the nucleus, the alternative CBC with NCBP3 does not bind snRNA and associates only with mRNA thereby playing a role in only mRNA export. The chain is Nuclear cap-binding protein subunit 3 from Danio rerio (Zebrafish).